The following is a 177-amino-acid chain: Large ribosomal subunit protein uL6 (177 aa).

Belongs to the universal ribosomal protein uL6 family. As to quaternary structure, part of the 50S ribosomal subunit.

Its function is as follows. This protein binds to the 23S rRNA, and is important in its secondary structure. It is located near the subunit interface in the base of the L7/L12 stalk, and near the tRNA binding site of the peptidyltransferase center. This chain is Large ribosomal subunit protein uL6, found in Alteromonas mediterranea (strain DSM 17117 / CIP 110805 / LMG 28347 / Deep ecotype).